A 115-amino-acid chain; its full sequence is uncharacterized protein (115 aa).

This sequence to M.tuberculosis Rv3073c.

This is an uncharacterized protein from Escherichia coli (strain K12).